Here is a 210-residue protein sequence, read N- to C-terminus: Ribosomal RNA small subunit methyltransferase G (210 aa).

Residues Gly-76, Leu-81, Val-127–Glu-128, and Arg-142 each bind S-adenosyl-L-methionine.

This sequence belongs to the methyltransferase superfamily. RNA methyltransferase RsmG family.

It is found in the cytoplasm. The catalysed reaction is guanosine(527) in 16S rRNA + S-adenosyl-L-methionine = N(7)-methylguanosine(527) in 16S rRNA + S-adenosyl-L-homocysteine. In terms of biological role, specifically methylates the N7 position of guanine in position 527 of 16S rRNA. In Vibrio atlanticus (strain LGP32) (Vibrio splendidus (strain Mel32)), this protein is Ribosomal RNA small subunit methyltransferase G.